Here is a 637-residue protein sequence, read N- to C-terminus: Chaperone protein dnaK2 (637 aa).

Thr-197 carries the phosphothreonine; by autocatalysis modification. A disordered region spans residues 602–637 (AAAGGAAPGGDAGASAASGGGDASDDVIDAEFTETK). Positions 603–623 (AAGGAAPGGDAGASAASGGGD) are enriched in gly residues. The segment covering 624-637 (ASDDVIDAEFTETK) has biased composition (acidic residues).

The protein belongs to the heat shock protein 70 family.

Its function is as follows. Acts as a chaperone. The sequence is that of Chaperone protein dnaK2 (dnaK2) from Parasynechococcus marenigrum (strain WH8102).